A 396-amino-acid polypeptide reads, in one-letter code: Elongation factor Tu (396 aa).

The tr-type G domain occupies 10-205; that stretch reads KPHVNIGTIG…AVDESIPDPV (196 aa). A G1 region spans residues 19-26; that stretch reads GHVDHGKT. 19–26 contacts GTP; the sequence is GHVDHGKT. T26 contributes to the Mg(2+) binding site. Residues 62–66 form a G2 region; sequence GITIN. The tract at residues 83–86 is G3; sequence DAPG. GTP is bound by residues 83–87 and 138–141; these read DAPGH and NKAD. Positions 138 to 141 are G4; it reads NKAD. The tract at residues 175–177 is G5; the sequence is SAL.

This sequence belongs to the TRAFAC class translation factor GTPase superfamily. Classic translation factor GTPase family. EF-Tu/EF-1A subfamily. In terms of assembly, monomer.

Its subcellular location is the cytoplasm. The enzyme catalyses GTP + H2O = GDP + phosphate + H(+). Functionally, GTP hydrolase that promotes the GTP-dependent binding of aminoacyl-tRNA to the A-site of ribosomes during protein biosynthesis. The polypeptide is Elongation factor Tu (Mycolicibacterium vanbaalenii (strain DSM 7251 / JCM 13017 / BCRC 16820 / KCTC 9966 / NRRL B-24157 / PYR-1) (Mycobacterium vanbaalenii)).